We begin with the raw amino-acid sequence, 110 residues long: U1-lycotoxin-Ls1gg (110 aa).

The N-terminal stretch at Met1–Ala20 is a signal peptide. Residues Glu21–Arg44 constitute a propeptide that is removed on maturation. Cystine bridges form between Cys54–Cys71, Cys61–Cys89, and Cys73–Cys87.

Belongs to the neurotoxin 19 (CSTX) family. 03 subfamily. Expressed by the venom gland.

Its subcellular location is the secreted. The chain is U1-lycotoxin-Ls1gg from Lycosa singoriensis (Wolf spider).